The following is a 52-amino-acid chain: uncharacterized protein (52 aa).

Residues 1–52 form a disordered region; sequence MVNNDAKIGRREFYDRVESVRPKSPPRERPTYTYSNSRTVDGYSNRGPRADF. Basic and acidic residues predominate over residues 7 to 30; it reads KIGRREFYDRVESVRPKSPPRERP.

This is an uncharacterized protein from Dictyostelium discoideum (Social amoeba).